The following is a 49-amino-acid chain: Small ribosomal subunit protein eS31 (49 aa).

Zn(2+) is bound by residues Cys-21, Cys-24, Cys-39, and Cys-42. A C4-type zinc finger spans residues 21–42; it reads CPRCGNGVFLAEHEDRMSCGRC.

It belongs to the eukaryotic ribosomal protein eS31 family. Part of the 30S ribosomal subunit. Requires Zn(2+) as cofactor.

The polypeptide is Small ribosomal subunit protein eS31 (Methanothrix thermoacetophila (strain DSM 6194 / JCM 14653 / NBRC 101360 / PT) (Methanosaeta thermophila)).